The chain runs to 266 residues: Putative carbamate hydrolase RutD (266 aa).

Residues 14–115 (PVVVLISGLG…TMLVSVNGWL (102 aa)) form the AB hydrolase-1 domain.

The protein belongs to the AB hydrolase superfamily. Hydrolase RutD family.

It catalyses the reaction carbamate + 2 H(+) = NH4(+) + CO2. Involved in pyrimidine catabolism. May facilitate the hydrolysis of carbamate, a reaction that can also occur spontaneously. The protein is Putative carbamate hydrolase RutD of Shigella flexneri serotype X (strain 2002017).